A 220-amino-acid chain; its full sequence is GTP cyclohydrolase 1 (220 aa).

3 residues coordinate Zn(2+): Cys-109, His-112, and Cys-180.

This sequence belongs to the GTP cyclohydrolase I family. In terms of assembly, homomer.

It catalyses the reaction GTP + H2O = 7,8-dihydroneopterin 3'-triphosphate + formate + H(+). It functions in the pathway cofactor biosynthesis; 7,8-dihydroneopterin triphosphate biosynthesis; 7,8-dihydroneopterin triphosphate from GTP: step 1/1. In Edwardsiella ictaluri (strain 93-146), this protein is GTP cyclohydrolase 1.